The chain runs to 266 residues: Glucosamine-6-phosphate deaminase (266 aa).

D72 (proton acceptor; for enolization step) is an active-site residue. Residue D141 is the For ring-opening step of the active site. The active-site Proton acceptor; for ring-opening step is H143. E148 serves as the catalytic For ring-opening step.

This sequence belongs to the glucosamine/galactosamine-6-phosphate isomerase family. NagB subfamily. Homohexamer.

It catalyses the reaction alpha-D-glucosamine 6-phosphate + H2O = beta-D-fructose 6-phosphate + NH4(+). It participates in amino-sugar metabolism; N-acetylneuraminate degradation; D-fructose 6-phosphate from N-acetylneuraminate: step 5/5. Allosterically activated by N-acetylglucosamine 6-phosphate (GlcNAc6P). In terms of biological role, catalyzes the reversible isomerization-deamination of glucosamine 6-phosphate (GlcN6P) to form fructose 6-phosphate (Fru6P) and ammonium ion. This chain is Glucosamine-6-phosphate deaminase, found in Pectobacterium carotovorum subsp. carotovorum (strain PC1).